Reading from the N-terminus, the 336-residue chain is MLYRIARAGIFKLDAEKAHDLAIQNFKRFNGTPLDIFYRQKLVSKPVEVMGIQFKNPIGLAAGLEKNGECIEAFGAMGFGFIEVGTVTPRPQAGNDKPRLFRLIEAEGIINRMGFNNLGVDNLVENVKKAKYDGVIGINIGKNKDTPIEKGTEDYLICMEKVYQYAGYIAINISSPNTPGLRTLQYGEALDDLLSQLKEKQKELAEKYGKYVPIALKIAPDLDDNELSQIADSLMKYKIDGVIATNTTLDRSMVEGMKHAEEMGGLSGRPIQTRSTEVVRRLKELLGDSLPIIGVGGVDSYVAAKEKMVAGADLVQVYSGFIYKGPNLIRDIVNNI.

Residues 62 to 66 (AGLEK) and Thr86 each bind FMN. Position 66 (Lys66) interacts with substrate. 111–115 (NRMGF) is a binding site for substrate. Asn139 and Asn172 together coordinate FMN. Asn172 is a binding site for substrate. The active-site Nucleophile is Ser175. Asn177 is a substrate binding site. Positions 217 and 245 each coordinate FMN. 246–247 (NT) contributes to the substrate binding site. Residues Gly268, Gly297, and 318-319 (YS) each bind FMN.

The protein belongs to the dihydroorotate dehydrogenase family. Type 2 subfamily. Monomer. Requires FMN as cofactor.

It is found in the cell membrane. It carries out the reaction (S)-dihydroorotate + a quinone = orotate + a quinol. Its pathway is pyrimidine metabolism; UMP biosynthesis via de novo pathway; orotate from (S)-dihydroorotate (quinone route): step 1/1. In terms of biological role, catalyzes the conversion of dihydroorotate to orotate with quinone as electron acceptor. The sequence is that of Dihydroorotate dehydrogenase (quinone) from Aliivibrio salmonicida (strain LFI1238) (Vibrio salmonicida (strain LFI1238)).